Here is a 1141-residue protein sequence, read N- to C-terminus: Sterol regulatory element-binding protein 2 (1141 aa).

Positions 1 to 50 (MDDSGELGGLETMETLTELGDELTLGDIDEMLQFVSNQVGEFPDLFSEQL) are transcriptional activation (acidic). The Cytoplasmic segment spans residues 1–479 (MDDSGELGGL…PPVALGMVDR (479 aa)). The tract at residues 48 to 144 (EQLCSSFPGS…PQPQPQPQTQ (97 aa)) is disordered. Over residues 63 to 82 (SSGSSGSSSSSSNGRGSSSG) the composition is skewed to low complexity. The segment covering 88 to 97 (VQRSFTQVTL) has biased composition (polar residues). A compositionally biased stretch (low complexity) spans 98–110 (PSFSPSAASPQAP). Residues 114-126 (VKVSPTSVPTTPR) show a composition bias toward polar residues. The interaction with LMNA stretch occupies residues 237–491 (QQVPVLVQPQ…ILLCVLTFLC (255 aa)). Residues 330 to 380 (ERRTTHNIIEKRYRSSINDKIIELKDLVMGTDAKMHKSGVLRKAIDYIKYL) form the bHLH domain. Residues 380–401 (LQQVNHKLRQENMVLKLANQKN) form a leucine-zipper region. Lys-464 is covalently cross-linked (Glycyl lysine isopeptide (Lys-Gly) (interchain with G-Cter in SUMO2)). A helical membrane pass occupies residues 480-500 (SRILLCVLTFLCLSFNPLTSL). Over 501-533 (LQWGGAHDSDQHPHSGSGRSVLSFESGSGGWFD) the chain is Lumenal. The chain crosses the membrane as a helical span at residues 534-554 (WMMPTLLLWLVNGVIVLSVFV). Residues 555–1139 (KLLVHGEPVI…VKLGGGTAIA (585 aa)) are Cytoplasmic-facing. Phosphoserine is present on residues Ser-855 and Ser-1098.

This sequence belongs to the SREBP family. Forms a tight complex with SCAP, the SCAP-SREBP complex, in the endoplasmic reticulum membrane and the Golgi apparatus. Interacts with PAQR3; the interaction anchors the SCAP-SREBP complex to the Golgi apparatus in low cholesterol conditions. Interacts (via C-terminal domain) with RNF139. In terms of assembly, homodimer; efficient DNA binding of the soluble transcription factor fragment requires dimerization with another bHLH protein. Interacts with LMNA. Post-translationally, processed in the Golgi apparatus, releasing the protein from the membrane. At low cholesterol the SCAP-SREBP complex is recruited into COPII vesicles for export from the endoplasmic reticulum. In the Golgi, complex SREBPs are cleaved sequentially by site-1 (MBTPS1, S1P) and site-2 (MBTPS2, S2P) protease. The first cleavage by site-1 protease occurs within the luminal loop, the second cleavage by site-2 protease occurs within the first transmembrane domain, releasing the transcription factor from the Golgi membrane. Apoptosis triggers cleavage by the cysteine proteases caspase-3 and caspase-7. Cleavage and activation is induced by mediated cholesterol efflux. In terms of processing, phosphorylated by AMPK, leading to suppress protein processing and nuclear translocation, and repress target gene expression. SCAP-free SREBF2 is ubiquitinated by the BCR(ARMC5) complex, leading to its degradation. Post-translationally, ubiquitinated; the nuclear form has a rapid turnover and is rapidly ubiquitinated and degraded by the proteasome in the nucleus. In terms of tissue distribution, ubiquitously expressed in adult and fetal tissues.

It localises to the endoplasmic reticulum membrane. The protein localises to the golgi apparatus membrane. Its subcellular location is the cytoplasmic vesicle. The protein resides in the COPII-coated vesicle membrane. It is found in the nucleus. With respect to regulation, activation by cleavage is down-regulated upon activation of SIRT3-dependent PRKAA1/AMPK-alpha signaling cascade which leads to inhibition of ATP-consuming lipogenesis to restore cellular energy balance. In terms of biological role, precursor of the transcription factor form (Processed sterol regulatory element-binding protein 2), which is embedded in the endoplasmic reticulum membrane. Low sterol concentrations promote processing of this form, releasing the transcription factor form that translocates into the nucleus and activates transcription of genes involved in cholesterol biosynthesis. Key transcription factor that regulates expression of genes involved in cholesterol biosynthesis. Binds to the sterol regulatory element 1 (SRE-1) (5'-ATCACCCCAC-3'). Has dual sequence specificity binding to both an E-box motif (5'-ATCACGTGA-3') and to SRE-1 (5'-ATCACCCCAC-3'). Regulates transcription of genes related to cholesterol synthesis pathway. This is Sterol regulatory element-binding protein 2 from Homo sapiens (Human).